The primary structure comprises 32 residues: U3-cyrtautoxin-As1a (32 aa).

Intrachain disulfides connect C4-C19, C11-C24, and C18-C29.

This sequence belongs to the neurotoxin 14 (magi-1) family. It to aptotoxin III. As to expression, expressed by the venom gland.

It localises to the secreted. Functionally, is both paralytic and lethal, when injected into lepidopteran larvae. Is a slower acting toxin, being lethal at 24 hours, but not paralytic at 1 hour post-injection. This Apomastus schlingeri (Trap-door spider) protein is U3-cyrtautoxin-As1a.